A 449-amino-acid chain; its full sequence is N-succinylarginine dihydrolase (449 aa).

Substrate contacts are provided by residues 19-28 (GGLSYGNVAS), Asn110, and 137-138 (HR). Positions 23–43 (YGNVASQSNSQQASNPREAAR) are disordered. The segment covering 27–37 (ASQSNSQQASN) has biased composition (low complexity). Glu174 is a catalytic residue. Arg214 provides a ligand contact to substrate. Residue His250 is part of the active site. Positions 252 and 365 each coordinate substrate. The Nucleophile role is filled by Cys371.

It belongs to the succinylarginine dihydrolase family. Homodimer.

The enzyme catalyses N(2)-succinyl-L-arginine + 2 H2O + 2 H(+) = N(2)-succinyl-L-ornithine + 2 NH4(+) + CO2. Its pathway is amino-acid degradation; L-arginine degradation via AST pathway; L-glutamate and succinate from L-arginine: step 2/5. Its function is as follows. Catalyzes the hydrolysis of N(2)-succinylarginine into N(2)-succinylornithine, ammonia and CO(2). The sequence is that of N-succinylarginine dihydrolase from Pseudomonas putida (strain ATCC 700007 / DSM 6899 / JCM 31910 / BCRC 17059 / LMG 24140 / F1).